Reading from the N-terminus, the 333-residue chain is MITMALNFYKYYSRQIKYALHFNILNNSIIDAENKYINFQKPLKNVIVSDSMFIDTAYLLKIKKMIKSIKGVFWADFVLKKYYPLYSDYLKGKISNVGTDGKINYGEILNINPDMIFLIDWNIFNPLSKWLDKNNIPYTKTGNYKEPKFLGKMEWIKFYASFYNKYKKAEKVFNKIIEEKRRILKSLNSRSIKYKPVVAFFGYHKNQPYIYGKSHYIPNWIREIKGNYLFENVEGTNYHYIDRKIFNSRAKYADVCILDTMGEDIDIKELLKNNPHFLKFRAYKNKRFYITTKDYLKFETLKCSEVMEEYVKIIHPKIYQNGDNDLKYFIKVV.

Positions 45–318 (NVIVSDSMFI…EYVKIIHPKI (274 aa)) constitute a Fe/B12 periplasmic-binding domain.

This is an uncharacterized protein from Methanocaldococcus jannaschii (strain ATCC 43067 / DSM 2661 / JAL-1 / JCM 10045 / NBRC 100440) (Methanococcus jannaschii).